Reading from the N-terminus, the 198-residue chain is Holliday junction branch migration complex subunit RuvA (198 aa).

Residues Met1–His63 are domain I. A domain II region spans residues Thr64–Lys142. Positions Ala143 to Lys147 are flexible linker. Residues Ala148–Gly198 form a domain III region.

Belongs to the RuvA family. Homotetramer. Forms an RuvA(8)-RuvB(12)-Holliday junction (HJ) complex. HJ DNA is sandwiched between 2 RuvA tetramers; dsDNA enters through RuvA and exits via RuvB. An RuvB hexamer assembles on each DNA strand where it exits the tetramer. Each RuvB hexamer is contacted by two RuvA subunits (via domain III) on 2 adjacent RuvB subunits; this complex drives branch migration. In the full resolvosome a probable DNA-RuvA(4)-RuvB(12)-RuvC(2) complex forms which resolves the HJ.

It localises to the cytoplasm. Its function is as follows. The RuvA-RuvB-RuvC complex processes Holliday junction (HJ) DNA during genetic recombination and DNA repair, while the RuvA-RuvB complex plays an important role in the rescue of blocked DNA replication forks via replication fork reversal (RFR). RuvA specifically binds to HJ cruciform DNA, conferring on it an open structure. The RuvB hexamer acts as an ATP-dependent pump, pulling dsDNA into and through the RuvAB complex. HJ branch migration allows RuvC to scan DNA until it finds its consensus sequence, where it cleaves and resolves the cruciform DNA. This Streptococcus pyogenes serotype M18 (strain MGAS8232) protein is Holliday junction branch migration complex subunit RuvA.